An 89-amino-acid chain; its full sequence is Small ribosomal subunit protein uS15 (89 aa).

Residues 1-11 (MSIAAERKAEV) are compositionally biased toward basic and acidic residues. Residues 1 to 24 (MSIAAERKAEVIKTNATKAGDTGS) form a disordered region.

This sequence belongs to the universal ribosomal protein uS15 family. As to quaternary structure, part of the 30S ribosomal subunit. Forms a bridge to the 50S subunit in the 70S ribosome, contacting the 23S rRNA.

Functionally, one of the primary rRNA binding proteins, it binds directly to 16S rRNA where it helps nucleate assembly of the platform of the 30S subunit by binding and bridging several RNA helices of the 16S rRNA. In terms of biological role, forms an intersubunit bridge (bridge B4) with the 23S rRNA of the 50S subunit in the ribosome. The polypeptide is Small ribosomal subunit protein uS15 (Bradyrhizobium diazoefficiens (strain JCM 10833 / BCRC 13528 / IAM 13628 / NBRC 14792 / USDA 110)).